The following is a 161-amino-acid chain: Cyclic pyranopterin monophosphate synthase (161 aa).

Residues 75 to 77 (MCH) and 114 to 115 (ME) each bind substrate. The active site involves D129.

The protein belongs to the MoaC family. As to quaternary structure, homohexamer; trimer of dimers.

It catalyses the reaction (8S)-3',8-cyclo-7,8-dihydroguanosine 5'-triphosphate = cyclic pyranopterin phosphate + diphosphate. It functions in the pathway cofactor biosynthesis; molybdopterin biosynthesis. Functionally, catalyzes the conversion of (8S)-3',8-cyclo-7,8-dihydroguanosine 5'-triphosphate to cyclic pyranopterin monophosphate (cPMP). This Staphylococcus carnosus (strain TM300) protein is Cyclic pyranopterin monophosphate synthase.